The primary structure comprises 672 residues: tRNA 5-methylaminomethyl-2-thiouridine biosynthesis bifunctional protein MnmC (672 aa).

The interval 1–241 is tRNA (mnm(5)s(2)U34)-methyltransferase; it reads MLKVTTAHIH…KRECLQGFKP (241 aa). The FAD-dependent cmnm(5)s(2)U34 oxidoreductase stretch occupies residues 271–672; it reads IGGGISSLFS…RKLLKGTPVK (402 aa).

The protein in the N-terminal section; belongs to the methyltransferase superfamily. tRNA (mnm(5)s(2)U34)-methyltransferase family. This sequence in the C-terminal section; belongs to the DAO family. It depends on FAD as a cofactor.

Its subcellular location is the cytoplasm. The enzyme catalyses 5-aminomethyl-2-thiouridine(34) in tRNA + S-adenosyl-L-methionine = 5-methylaminomethyl-2-thiouridine(34) in tRNA + S-adenosyl-L-homocysteine + H(+). Functionally, catalyzes the last two steps in the biosynthesis of 5-methylaminomethyl-2-thiouridine (mnm(5)s(2)U) at the wobble position (U34) in tRNA. Catalyzes the FAD-dependent demodification of cmnm(5)s(2)U34 to nm(5)s(2)U34, followed by the transfer of a methyl group from S-adenosyl-L-methionine to nm(5)s(2)U34, to form mnm(5)s(2)U34. The polypeptide is tRNA 5-methylaminomethyl-2-thiouridine biosynthesis bifunctional protein MnmC (Mannheimia succiniciproducens (strain KCTC 0769BP / MBEL55E)).